Reading from the N-terminus, the 215-residue chain is Cytochrome b6 (215 aa).

The helical transmembrane segment at 32 to 52 (IFYCLGGITLTCFLVQVATGF) threads the bilayer. Residue Cys35 coordinates heme c. The heme b site is built by His86 and His100. The next 3 membrane-spanning stretches (helical) occupy residues 90–110 (ASMM…TGGF), 116–136 (LTWV…VTGY), and 186–206 (LHTF…FLMI). Positions 187 and 202 each coordinate heme b.

It belongs to the cytochrome b family. PetB subfamily. As to quaternary structure, the 4 large subunits of the cytochrome b6-f complex are cytochrome b6, subunit IV (17 kDa polypeptide, PetD), cytochrome f and the Rieske protein, while the 4 small subunits are PetG, PetL, PetM and PetN. The complex functions as a dimer. Requires heme b as cofactor. Heme c is required as a cofactor.

It localises to the plastid. It is found in the chloroplast thylakoid membrane. Component of the cytochrome b6-f complex, which mediates electron transfer between photosystem II (PSII) and photosystem I (PSI), cyclic electron flow around PSI, and state transitions. The protein is Cytochrome b6 of Pinus koraiensis (Korean pine).